Consider the following 50-residue polypeptide: Large ribosomal subunit protein eL40 (50 aa).

Belongs to the eukaryotic ribosomal protein eL40 family.

In Aeropyrum pernix (strain ATCC 700893 / DSM 11879 / JCM 9820 / NBRC 100138 / K1), this protein is Large ribosomal subunit protein eL40.